We begin with the raw amino-acid sequence, 909 residues long: Aconitate hydratase A (909 aa).

C450, C516, and C519 together coordinate [4Fe-4S] cluster.

It belongs to the aconitase/IPM isomerase family. As to quaternary structure, monomer. Requires [4Fe-4S] cluster as cofactor.

It catalyses the reaction citrate = D-threo-isocitrate. The catalysed reaction is 3-hydroxybutane-1,2,3-tricarboxylate = 2-methyl-cis-aconitate + H2O. Its pathway is carbohydrate metabolism; tricarboxylic acid cycle; isocitrate from oxaloacetate: step 2/2. Its function is as follows. Involved in both the tricarboxylic acid (TCA) and methylcitric acid cycles. Catalyzes the reversible isomerization of citrate to isocitrate via cis-aconitate. Also catalyzes the rehydration of 2-methyl-cis-aconitate to produce 2-methylisocitrate. The apo form of AcnA functions as a RNA-binding regulatory protein which plays a role in the regulation of citrate concentration and in the sporulation. To prevent the accumulation of excessive levels of citrate, it binds near the 5' end of the citZ mRNA, decreasing its stability and thereby limiting the concentration of citrate synthase in the cell. Aconitase also binds to the gerE transcript late in sporulation and stabilizes it for translation, thereby increasing the rate and level of GerE protein accumulation. The sequence is that of Aconitate hydratase A (citB) from Bacillus subtilis (strain 168).